The following is a 209-amino-acid chain: Max dimerization protein 4 (209 aa).

Residues 6–23 form an interaction with SIN3A and SIN3B region; it reads LLLLLEAAEYLERRDREA. The bHLH domain occupies 53 to 105; the sequence is NNRSSHNELEKHRRAKLRLYLEQLKQLGPLGPDSTRHTTLSLLKRAKMHIKKL. A disordered region spans residues 137 to 209; that stretch reads SVERVRTDST…CRRPGCPGLS (73 aa). Residues 153–163 show a composition bias toward acidic residues; it reads DDSEQEVDIEG. The span at 185–195 shows a compositional bias: polar residues; it reads SLQSSGCSDSS.

In terms of assembly, efficient DNA binding requires dimerization with another bHLH protein. Binds DNA as a heterodimer with MAX. Interacts with SIN3A AND SIN3B. Interacts with RNF17.

Its subcellular location is the nucleus. Transcriptional repressor. Binds with MAX to form a sequence-specific DNA-binding protein complex which recognizes the core sequence 5'-CAC[GA]TG-3'. Antagonizes MYC transcriptional activity by competing for MAX and suppresses MYC dependent cell transformation. The protein is Max dimerization protein 4 (Mxd4) of Mus musculus (Mouse).